The sequence spans 132 residues: Small ribosomal subunit protein uS8 (132 aa).

It belongs to the universal ribosomal protein uS8 family. As to quaternary structure, part of the 30S ribosomal subunit. Contacts proteins S5 and S12.

Functionally, one of the primary rRNA binding proteins, it binds directly to 16S rRNA central domain where it helps coordinate assembly of the platform of the 30S subunit. This chain is Small ribosomal subunit protein uS8, found in Bartonella henselae (strain ATCC 49882 / DSM 28221 / CCUG 30454 / Houston 1) (Rochalimaea henselae).